A 150-amino-acid chain; its full sequence is UPF0756 membrane protein PM0771 (150 aa).

4 helical membrane passes run 12–34, 52–72, 79–99, and 123–143; these read LVVL…AAIL, HGIT…IVSG, LAVF…LVAW, and ILGV…AGIL.

The protein belongs to the UPF0756 family.

The protein localises to the cell membrane. The polypeptide is UPF0756 membrane protein PM0771 (Pasteurella multocida (strain Pm70)).